The primary structure comprises 463 residues: 23S rRNA (uracil(1939)-C(5))-methyltransferase RlmD (463 aa).

A TRAM domain is found at 6–76 (KSRKPQQPEY…KRLEEAEMVA (71 aa)). Residues Cys-90, Cys-96, Cys-99, and Cys-178 each contribute to the [4Fe-4S] cluster site. S-adenosyl-L-methionine is bound by residues Gln-288, Phe-317, Asn-322, Glu-341, Asp-368, and Asp-389. Cys-415 serves as the catalytic Nucleophile.

The protein belongs to the class I-like SAM-binding methyltransferase superfamily. RNA M5U methyltransferase family. RlmD subfamily.

The enzyme catalyses uridine(1939) in 23S rRNA + S-adenosyl-L-methionine = 5-methyluridine(1939) in 23S rRNA + S-adenosyl-L-homocysteine + H(+). Catalyzes the formation of 5-methyl-uridine at position 1939 (m5U1939) in 23S rRNA. This Acinetobacter baumannii (strain SDF) protein is 23S rRNA (uracil(1939)-C(5))-methyltransferase RlmD.